We begin with the raw amino-acid sequence, 107 residues long: Virulence factor PGA16 (107 aa).

An N-terminal signal peptide occupies residues 1 to 18; it reads MRVFQIVYILIISNLIYA. A disordered region spans residues 26-56; the sequence is SHHHKNDNNIADNTNNNNNNNNNNNNNNITN. The span at 33 to 56 shows a compositional bias: low complexity; that stretch reads NNIADNTNNNNNNNNNNNNNNITN. Residues Asn-53 and Asn-56 are each glycosylated (N-linked (GlcNAc...) asparagine). Gly-76 carries GPI-anchor amidated glycine lipidation. Positions 77-107 are cleaved as a propeptide — removed in mature form; the sequence is VAAMGGILGQNGWFYGDAGLMAAIFGAMLLL.

The protein localises to the cell membrane. Cell surface GPI-anchored protein required for virulence. Mediates hyphal ramification which is important for the interaction with host cells. This is Virulence factor PGA16 (PGA16) from Candida albicans (strain SC5314 / ATCC MYA-2876) (Yeast).